Consider the following 832-residue polypeptide: Leucine--tRNA ligase (832 aa).

The 'HIGH' region signature appears at 58–68 (PYPSGDLHMGH). The 'KMSKS' region motif lies at 598-602 (AMSKS). Lys-601 is a binding site for ATP.

It belongs to the class-I aminoacyl-tRNA synthetase family.

It localises to the cytoplasm. It catalyses the reaction tRNA(Leu) + L-leucine + ATP = L-leucyl-tRNA(Leu) + AMP + diphosphate. The polypeptide is Leucine--tRNA ligase (Acidothermus cellulolyticus (strain ATCC 43068 / DSM 8971 / 11B)).